The primary structure comprises 244 residues: Probable transcriptional regulatory protein CHY_1525 (244 aa).

This sequence belongs to the TACO1 family.

It is found in the cytoplasm. The chain is Probable transcriptional regulatory protein CHY_1525 from Carboxydothermus hydrogenoformans (strain ATCC BAA-161 / DSM 6008 / Z-2901).